The following is a 511-amino-acid chain: Anthranilate synthase component 1 (511 aa).

A disordered region spans residues 1-36; the sequence is MTTHAAEAPTTDPQGAPGSQKTPDATEAEEAARATV. A compositionally biased stretch (polar residues) spans 11-23; it reads TDPQGAPGSQKTP. L-tryptophan contacts are provided by residues Ser84 and 292 to 294; that span reads PYM. 328–329 is a binding site for chorismate; the sequence is GT. Glu355 contributes to the Mg(2+) binding site. Chorismate is bound by residues Tyr443, Arg463, 477–479, and Gly479; that span reads GAG. Glu492 provides a ligand contact to Mg(2+).

This sequence belongs to the anthranilate synthase component I family. In terms of assembly, heterotetramer consisting of two non-identical subunits: a beta subunit (TrpG) and a large alpha subunit (TrpE). Mg(2+) is required as a cofactor.

The enzyme catalyses chorismate + L-glutamine = anthranilate + pyruvate + L-glutamate + H(+). Its pathway is amino-acid biosynthesis; L-tryptophan biosynthesis; L-tryptophan from chorismate: step 1/5. Its activity is regulated as follows. Feedback inhibited by tryptophan. Functionally, part of a heterotetrameric complex that catalyzes the two-step biosynthesis of anthranilate, an intermediate in the biosynthesis of L-tryptophan. In the first step, the glutamine-binding beta subunit (TrpG) of anthranilate synthase (AS) provides the glutamine amidotransferase activity which generates ammonia as a substrate that, along with chorismate, is used in the second step, catalyzed by the large alpha subunit of AS (TrpE) to produce anthranilate. In the absence of TrpG, TrpE can synthesize anthranilate directly from chorismate and high concentrations of ammonia. The polypeptide is Anthranilate synthase component 1 (trpE) (Streptomyces coelicolor (strain ATCC BAA-471 / A3(2) / M145)).